The chain runs to 212 residues: Octanoyltransferase (212 aa).

Positions 34–208 (GQRQDTLILL…AFERQFNARC (175 aa)) constitute a BPL/LPL catalytic domain. Residues 72–79 (RGGQVTYH), 139–141 (SIG), and 152–154 (GLS) each bind substrate. C170 acts as the Acyl-thioester intermediate in catalysis.

The protein belongs to the LipB family.

The protein localises to the cytoplasm. It carries out the reaction octanoyl-[ACP] + L-lysyl-[protein] = N(6)-octanoyl-L-lysyl-[protein] + holo-[ACP] + H(+). Its pathway is protein modification; protein lipoylation via endogenous pathway; protein N(6)-(lipoyl)lysine from octanoyl-[acyl-carrier-protein]: step 1/2. Functionally, catalyzes the transfer of endogenously produced octanoic acid from octanoyl-acyl-carrier-protein onto the lipoyl domains of lipoate-dependent enzymes. Lipoyl-ACP can also act as a substrate although octanoyl-ACP is likely to be the physiological substrate. The chain is Octanoyltransferase from Magnetococcus marinus (strain ATCC BAA-1437 / JCM 17883 / MC-1).